Here is a 396-residue protein sequence, read N- to C-terminus: Stearoyl-[acyl-carrier-protein] 9-desaturase, chloroplastic (396 aa).

A chloroplast-targeting transit peptide spans 1–32 (MALKLNPVTTFPSTRSLNNFSSRSPRTFLMAA). 6 residues coordinate Fe cation: Glu138, Glu176, His179, Glu229, Glu262, and His265.

The protein belongs to the fatty acid desaturase type 2 family. Homodimer. Fe(2+) serves as cofactor.

It localises to the plastid. It is found in the chloroplast. It catalyses the reaction octadecanoyl-[ACP] + 2 reduced [2Fe-2S]-[ferredoxin] + O2 + 2 H(+) = (9Z)-octadecenoyl-[ACP] + 2 oxidized [2Fe-2S]-[ferredoxin] + 2 H2O. It participates in lipid metabolism; fatty acid metabolism. Its function is as follows. Converts stearoyl-ACP to oleoyl-ACP by introduction of a cis double bond between carbons 9 and 10 of the acyl chain. The protein is Stearoyl-[acyl-carrier-protein] 9-desaturase, chloroplastic of Linum usitatissimum (Flax).